A 439-amino-acid chain; its full sequence is Protein PHYTOCHROME KINASE SUBSTRATE 1 (439 aa).

Residues 1–14 (MVTLTPSSASTPKT) show a composition bias toward polar residues. Disordered regions lie at residues 1–22 (MVTLTPSSASTPKTSFDFMKNN), 54–80 (KTLNMSINPKQEEFGDEKKMVKKAPED), and 100–139 (QGSSVLSLTNPEVERTVVDSKQSAKKSTGTPSVRSESSWN). A compositionally biased stretch (basic and acidic residues) spans 63 to 79 (KQEEFGDEKKMVKKAPE). 2 stretches are compositionally biased toward polar residues: residues 100–109 (QGSSVLSLTN) and 118–139 (DSKQSAKKSTGTPSVRSESSWN). Phosphoserine occurs at positions 238 and 244. Disordered regions lie at residues 259 to 311 (LPLP…PTCY) and 355 to 439 (TAKS…LYSQ). Residues 412 to 421 (TKPKSFETRR) show a composition bias toward basic and acidic residues. The span at 424-439 (SNSSISHTQSSLLYSQ) shows a compositional bias: low complexity.

The protein belongs to the PKS family. As to quaternary structure, interacts with PKS2, RPT3, PHOT1, PHOT2 and the C-termini of both phytochromes A (phyA) and B (phyB). Binds both spectral forms of phytochrome, Pr and Pfr. Post-translationally, phosphorylated on Ser and to a lower extent on Thr by phytochromes. Phosphorylation is stimulated twofold by red light. As to expression, expressed in young seedlings in both darkness and light. Moderate in leaves and very low in roots and flowers. Expressed in the elongation zone of the root and hypocotyl.

The protein resides in the cell membrane. Its function is as follows. May be responsible for light-regulated cytoplasmic sequestration of phytochromes or may be a negative regulator of phytochrome B signaling. Component of the network that modulates the very low-fluence response (VLFR) branch of phyA signaling. Acts positively in PHOT1 signaling. Regulates phytochrome-mediated photomorphogenesis and hypocotyl phototropism. Involved in the control of leaf flattening and leaf positioning. Promotes negative root phototropism and negatively regulates root gravitropism. May act by controlling auxin homeostasis. This is Protein PHYTOCHROME KINASE SUBSTRATE 1 (PKS1) from Arabidopsis thaliana (Mouse-ear cress).